A 368-amino-acid chain; its full sequence is Dihydroorotate dehydrogenase (quinone) (368 aa).

Residues 67–71 and Thr91 contribute to the FMN site; that span reads AGFDK. Lys71 serves as a coordination point for substrate. Position 116 to 120 (116 to 120) interacts with substrate; the sequence is NRMGF. 2 residues coordinate FMN: Asn146 and Asn179. Position 179 (Asn179) interacts with substrate. The active-site Nucleophile is Ser182. Asn184 provides a ligand contact to substrate. 2 residues coordinate FMN: Lys222 and Thr250. 251–252 provides a ligand contact to substrate; that stretch reads NT. FMN contacts are provided by residues Gly276, Gly305, and 326 to 327; that span reads YS.

Belongs to the dihydroorotate dehydrogenase family. Type 2 subfamily. Monomer. FMN is required as a cofactor.

It localises to the cell membrane. It catalyses the reaction (S)-dihydroorotate + a quinone = orotate + a quinol. It functions in the pathway pyrimidine metabolism; UMP biosynthesis via de novo pathway; orotate from (S)-dihydroorotate (quinone route): step 1/1. Its function is as follows. Catalyzes the conversion of dihydroorotate to orotate with quinone as electron acceptor. This Streptomyces avermitilis (strain ATCC 31267 / DSM 46492 / JCM 5070 / NBRC 14893 / NCIMB 12804 / NRRL 8165 / MA-4680) protein is Dihydroorotate dehydrogenase (quinone).